An 89-amino-acid chain; its full sequence is Large ribosomal subunit protein bL31B (89 aa).

A disordered region spans residues 70–89; it reads RVQRFESRRRRRQQQSGEQG.

Belongs to the bacterial ribosomal protein bL31 family. Type B subfamily. As to quaternary structure, part of the 50S ribosomal subunit.

The polypeptide is Large ribosomal subunit protein bL31B (Rubrobacter xylanophilus (strain DSM 9941 / JCM 11954 / NBRC 16129 / PRD-1)).